Reading from the N-terminus, the 223-residue chain is Coiled-coil domain-containing protein 70 (223 aa).

Residues 129 to 153 (NALWERDRNLLQEDKALWEEEKALW) are a coiled coil. The segment at 199-223 (EQRHQNGPYNANEEPQSTSFPRGRA) is disordered. The span at 203–223 (QNGPYNANEEPQSTSFPRGRA) shows a compositional bias: polar residues.

The protein is Coiled-coil domain-containing protein 70 of Mus musculus (Mouse).